A 137-amino-acid chain; its full sequence is Small ribosomal subunit protein bS6 (137 aa).

It belongs to the bacterial ribosomal protein bS6 family.

Binds together with bS18 to 16S ribosomal RNA. This chain is Small ribosomal subunit protein bS6, found in Mycoplasma mycoides subsp. mycoides SC (strain CCUG 32753 / NCTC 10114 / PG1).